Reading from the N-terminus, the 738-residue chain is Conserved oligomeric Golgi complex subunit 2 (738 aa).

2 disordered regions span residues 474–504 and 668–687; these read IKKP…ETKP and KQAR…GMSD. Polar residues predominate over residues 483–500; the sequence is KEPSITQGNTEDQGSGPS.

This sequence belongs to the COG2 family. In terms of assembly, component of the conserved oligomeric Golgi complex which is composed of eight different subunits and is required for normal Golgi morphology and localization.

It is found in the golgi apparatus membrane. Required for normal Golgi morphology and function. The sequence is that of Conserved oligomeric Golgi complex subunit 2 (COG2) from Homo sapiens (Human).